Reading from the N-terminus, the 272-residue chain is Digeranylgeranylglyceryl phosphate synthase (272 aa).

8 helical membrane-spanning segments follow: residues 16–36 (AFIA…EIIL), 79–99 (ALYY…IISL), 100–120 (ENGI…YDLK), 124–144 (FIGN…GGLI), 148–168 (VNLG…REII), 194–214 (AVML…LLYY), 217–237 (IFSI…VYSA), and 252–272 (ISKY…MGAL).

It belongs to the UbiA prenyltransferase family. DGGGP synthase subfamily. It depends on Mg(2+) as a cofactor.

It localises to the cell membrane. The enzyme catalyses sn-3-O-(geranylgeranyl)glycerol 1-phosphate + (2E,6E,10E)-geranylgeranyl diphosphate = 2,3-bis-O-(geranylgeranyl)-sn-glycerol 1-phosphate + diphosphate. It functions in the pathway membrane lipid metabolism; glycerophospholipid metabolism. Functionally, prenyltransferase that catalyzes the transfer of the geranylgeranyl moiety of geranylgeranyl diphosphate (GGPP) to the C2 hydroxyl of (S)-3-O-geranylgeranylglyceryl phosphate (GGGP). This reaction is the second ether-bond-formation step in the biosynthesis of archaeal membrane lipids. The chain is Digeranylgeranylglyceryl phosphate synthase from Methanosphaera stadtmanae (strain ATCC 43021 / DSM 3091 / JCM 11832 / MCB-3).